A 462-amino-acid polypeptide reads, in one-letter code: UDP-N-acetylmuramoylalanine--D-glutamate ligase (462 aa).

125–131 (GSDGKTT) is a binding site for ATP.

The protein belongs to the MurCDEF family.

The protein localises to the cytoplasm. The enzyme catalyses UDP-N-acetyl-alpha-D-muramoyl-L-alanine + D-glutamate + ATP = UDP-N-acetyl-alpha-D-muramoyl-L-alanyl-D-glutamate + ADP + phosphate + H(+). Its pathway is cell wall biogenesis; peptidoglycan biosynthesis. In terms of biological role, cell wall formation. Catalyzes the addition of glutamate to the nucleotide precursor UDP-N-acetylmuramoyl-L-alanine (UMA). The protein is UDP-N-acetylmuramoylalanine--D-glutamate ligase of Clostridium acetobutylicum (strain ATCC 824 / DSM 792 / JCM 1419 / IAM 19013 / LMG 5710 / NBRC 13948 / NRRL B-527 / VKM B-1787 / 2291 / W).